The primary structure comprises 295 residues: Nitrogenase iron protein (295 aa).

ATP is bound at residue 11–18 (GKGGIGKS). [4Fe-4S] cluster is bound at residue C99. ADP-ribosylarginine; by dinitrogenase reductase ADP-ribosyltransferase is present on R102. A [4Fe-4S] cluster-binding site is contributed by C133.

This sequence belongs to the NifH/BchL/ChlL family. As to quaternary structure, homodimer. [4Fe-4S] cluster is required as a cofactor. The reversible ADP-ribosylation of Arg-102 inactivates the nitrogenase reductase and regulates nitrogenase activity.

The enzyme catalyses N2 + 8 reduced [2Fe-2S]-[ferredoxin] + 16 ATP + 16 H2O = H2 + 8 oxidized [2Fe-2S]-[ferredoxin] + 2 NH4(+) + 16 ADP + 16 phosphate + 6 H(+). Functionally, the key enzymatic reactions in nitrogen fixation are catalyzed by the nitrogenase complex, which has 2 components: the iron protein and the molybdenum-iron protein. This Zymomonas mobilis subsp. mobilis (strain ATCC 31821 / ZM4 / CP4) protein is Nitrogenase iron protein.